The following is a 408-amino-acid chain: Serine/threonine transporter SstT (408 aa).

9 helical membrane-spanning segments follow: residues 11-31 (LANG…VSLA), 43-63 (FLGS…VFIL), 82-102 (IVVL…VLSM), 141-161 (ALMT…GLAL), 192-212 (IGIF…AIAG), 216-236 (LLAV…PLIV), 290-310 (IPLG…VLTL), 316-336 (LGIQ…AISA), and 363-383 (VAMQ…AAET).

Belongs to the dicarboxylate/amino acid:cation symporter (DAACS) (TC 2.A.23) family.

It localises to the cell inner membrane. It catalyses the reaction L-serine(in) + Na(+)(in) = L-serine(out) + Na(+)(out). The enzyme catalyses L-threonine(in) + Na(+)(in) = L-threonine(out) + Na(+)(out). Involved in the import of serine and threonine into the cell, with the concomitant import of sodium (symport system). The sequence is that of Serine/threonine transporter SstT from Shewanella sp. (strain ANA-3).